The chain runs to 543 residues: 2-succinyl-5-enolpyruvyl-6-hydroxy-3-cyclohexene-1-carboxylate synthase (543 aa).

This sequence belongs to the TPP enzyme family. MenD subfamily. Homodimer. Mg(2+) is required as a cofactor. The cofactor is Mn(2+). It depends on thiamine diphosphate as a cofactor.

The enzyme catalyses isochorismate + 2-oxoglutarate + H(+) = 5-enolpyruvoyl-6-hydroxy-2-succinyl-cyclohex-3-ene-1-carboxylate + CO2. Its pathway is quinol/quinone metabolism; 1,4-dihydroxy-2-naphthoate biosynthesis; 1,4-dihydroxy-2-naphthoate from chorismate: step 2/7. It participates in quinol/quinone metabolism; menaquinone biosynthesis. Catalyzes the thiamine diphosphate-dependent decarboxylation of 2-oxoglutarate and the subsequent addition of the resulting succinic semialdehyde-thiamine pyrophosphate anion to isochorismate to yield 2-succinyl-5-enolpyruvyl-6-hydroxy-3-cyclohexene-1-carboxylate (SEPHCHC). The polypeptide is 2-succinyl-5-enolpyruvyl-6-hydroxy-3-cyclohexene-1-carboxylate synthase (Corynebacterium glutamicum (strain R)).